Consider the following 442-residue polypeptide: Membrane sensor protein UhpC (442 aa).

The Cytoplasmic portion of the chain corresponds to 1–30; that stretch reads MLSFLKAPANAPLITDKHEVDARYRYWRRH. The helical transmembrane segment at 31-51 threads the bilayer; it reads ILITIWLGYALFYFTRKSFNA. Over 52–66 the chain is Periplasmic; the sequence is AAPEILASGILTRSD. A helical membrane pass occupies residues 67 to 87; sequence IGLLATLFYITYGVSKFVSGI. Residues 88-95 lie on the Cytoplasmic side of the membrane; it reads VSDRSNAR. Residues 96 to 118 form a helical membrane-spanning segment; sequence YFMGIGLIATGVVNILFGFSTSL. Over 119 to 121 the chain is Periplasmic; that stretch reads WAF. A helical membrane pass occupies residues 122-144; sequence ALLWALNAFFQGFGSPVCARLLT. At 145-162 the chain is on the cytoplasmic side; the sequence is AWYSRTERGGWWALWNTA. Residues 163–183 form a helical membrane-spanning segment; that stretch reads HNVGGALIPLVMAAVALHYGW. A topological domain (periplasmic) is located at residue arginine 184. A helical transmembrane segment spans residues 185–205; sequence VGMMVAGLLAIGVGMVLCWRL. The Cytoplasmic portion of the chain corresponds to 206–244; sequence RDRPQAIGLPPVGDWRHDALEVAQQQEGAGLSRKEILAK. The chain crosses the membrane as a helical span at residues 245-265; it reads YVLLNPYIWLLSLCYVLVYVV. Topologically, residues 266-289 are periplasmic; sequence RAAINDWGNLYMSETLGVDLVTAN. A helical membrane pass occupies residues 290–310; that stretch reads TAVSMFELGGFIGALVAGWGS. Topologically, residues 311-322 are cytoplasmic; that stretch reads DKLFNGNRGPMN. Residues 323 to 343 traverse the membrane as a helical segment; sequence LIFAAGILLSVGSLWLMPFAS. The Periplasmic portion of the chain corresponds to 344–347; it reads YVMQ. The helical transmembrane segment at 348 to 368 threads the bilayer; the sequence is AACFFTTGFFVFGPQMLIGMA. At 369-379 the chain is on the cytoplasmic side; it reads AAECSHKEAAG. Residues 380 to 400 form a helical membrane-spanning segment; it reads AATGFVGLFAYLGASLSGWPL. Topologically, residues 401 to 410 are periplasmic; the sequence is AKVLEIWHWT. Residues 411–431 traverse the membrane as a helical segment; that stretch reads GFFAVIAIAAGISALLLLPFL. The Cytoplasmic portion of the chain corresponds to 432-442; sequence NAQAPRETHEA.

It belongs to the major facilitator superfamily. Organophosphate:Pi antiporter (OPA) (TC 2.A.1.4) family.

The protein localises to the cell inner membrane. Part of the UhpABC signaling cascade that controls the expression of the hexose phosphate transporter UhpT. UhpC senses external glucose-6-phosphate and interacts with the histidine kinase UhpB, leading to the stimulation of the autokinase activity of UhpB. This chain is Membrane sensor protein UhpC (uhpC), found in Salmonella typhimurium (strain LT2 / SGSC1412 / ATCC 700720).